The sequence spans 185 residues: Intraflagellar transport protein 22 homolog (185 aa).

Residues 10–17 (GPCESGKT), 63–67 (DCGGD), and 123–126 (HKPG) each bind GTP. Position 137 is a phosphoserine (Ser137).

Belongs to the small GTPase superfamily. Rab family. As to quaternary structure, component of the IFT complex B, at least composed of IFT20, IFT22, IFT25, IFT27, IFT46, IFT52, TRAF3IP1/IFT54, IFT57, IFT74, IFT80, IFT81, and IFT88. Interacts with IFT88. Interacts with CFAP61.

Its subcellular location is the cell projection. The protein resides in the cilium. Its function is as follows. Small GTPase-like component of the intraflagellar transport (IFT) complex B. This chain is Intraflagellar transport protein 22 homolog (Ift22), found in Mus musculus (Mouse).